The chain runs to 237 residues: Golgi to ER traffic protein 1 (237 aa).

Residues 1-4 (MDSG) are Lumenal-facing. A helical transmembrane segment spans residues 5 to 24 (GWIVYCCIFFILLGKVLEYT). Topologically, residues 25 to 110 (SSYQDKWFTK…SSKKVFGRVK (86 aa)) are cytoplasmic. The stretch at 40 to 99 (EARKLNSQYHELLSERLRLQEENHSISAQDNYARWTKNNRKLGELDKKLGTIRDKLQETN) forms a coiled coil. Residues 111-131 (LIGLTIPFWILKIWQRSHVVY) traverse the membrane as a helical segment. Over 132–176 (HFPKQDLFPKLVTGVWARGWLYLALGPLQYLRNGSLNIQDYAPHG) the chain is Lumenal. A helical transmembrane segment spans residues 177 to 193 (VSLGIWIWALQATINTL). The Cytoplasmic portion of the chain corresponds to 194 to 237 (EFLVKQVILEKPVSPPPQKSKSATKAETKRPEKLEITDDKVELD). The segment at 205-237 (PVSPPPQKSKSATKAETKRPEKLEITDDKVELD) is disordered. Over residues 217–237 (TKAETKRPEKLEITDDKVELD) the composition is skewed to basic and acidic residues.

This sequence belongs to the WRB/GET1 family. In terms of assembly, component of the Golgi to ER traffic (GET) complex, which is composed of GET1, GET2 and GET3. Within the complex, GET1 and GET2 form a heterotetramer which is stabilized by phosphatidylinositol binding and which binds to the GET3 homodimer.

It is found in the endoplasmic reticulum membrane. It localises to the golgi apparatus membrane. Its function is as follows. Required for the post-translational delivery of tail-anchored (TA) proteins to the endoplasmic reticulum. Together with GET2, acts as a membrane receptor for soluble GET3, which recognizes and selectively binds the transmembrane domain of TA proteins in the cytosol. The GET complex cooperates with the HDEL receptor ERD2 to mediate the ATP-dependent retrieval of resident ER proteins that contain a C-terminal H-D-E-L retention signal from the Golgi to the ER. This Zygosaccharomyces rouxii (strain ATCC 2623 / CBS 732 / NBRC 1130 / NCYC 568 / NRRL Y-229) protein is Golgi to ER traffic protein 1.